The primary structure comprises 308 residues: Serine/threonine-protein phosphatase 4 catalytic subunit (308 aa).

Mn(2+)-binding residues include Asp51, His53, Asp79, and Asn111. The active-site Proton donor is the His112. Mn(2+) contacts are provided by His161 and His235.

The protein belongs to the PPP phosphatase family. PP-4 (PP-X) subfamily. In terms of assembly, catalytic subunit of the histone H2A phosphatase complex (HTP-C) containing PPH3, PSY2 and PSY4. Inactivated in a complex with phosphatase methylesterase PPE1 (PP2Ai). Interacts with phosphatase 2A activator RRD1, which can reactivate PP2Ai by dissociating the catalytic subunit from the complex. Interacts with SPT5 and TAP42. The cofactor is Mn(2+). In terms of processing, reversibly methyl esterified on Leu-308 by leucine carboxyl methyltransferase 1 (PPM1) and protein phosphatase methylesterase 1 (PPE1). Carboxyl methylation influences the affinity of the catalytic subunit for the different regulatory subunits, thereby modulating the PP2A holoenzyme's substrate specificity, enzyme activity and cellular localization.

The protein resides in the cytoplasm. Its subcellular location is the nucleus. It catalyses the reaction O-phospho-L-seryl-[protein] + H2O = L-seryl-[protein] + phosphate. The enzyme catalyses O-phospho-L-threonyl-[protein] + H2O = L-threonyl-[protein] + phosphate. Functionally, forms the histone H2A phosphatase complex in association with the regulatory subunits PSY2 and PSY4, which dephosphorylates H2AS128ph (gamma-H2A) that has been displaced from sites of DNA lesions in the double-stranded DNA break repair process. Dephosphorylation is necessary for efficient recovery from the DNA damage checkpoint. PPH3 is directly involved in the dephosphorylation and activation of the transcription factor GLN3 in response to nutrient availability. This chain is Serine/threonine-protein phosphatase 4 catalytic subunit (PPH3), found in Saccharomyces cerevisiae (strain ATCC 204508 / S288c) (Baker's yeast).